We begin with the raw amino-acid sequence, 227 residues long: Sensory transduction protein RegX3 (227 aa).

One can recognise a Response regulatory domain in the interval 3–116; it reads SVLIVEDEES…ELIARIRAVL (114 aa). Asp-52 carries the post-translational modification 4-aspartylphosphate. Positions 128–227 form a DNA-binding region, ompR/PhoB-type; that stretch reads DGVLESGPVR…VRGLGYKLEG (100 aa).

In terms of processing, phosphorylated by SenX3.

Member of the two-component regulatory system SenX3/RegX3. Specifically binds to the promoter region of the senX3-regX3 operon. The protein is Sensory transduction protein RegX3 of Mycobacterium bovis (strain ATCC BAA-935 / AF2122/97).